The sequence spans 130 residues: C-C motif chemokine 28 (130 aa).

The signal sequence occupies residues 1–16 (MQQAGLTLMAVAVCVA). 2 disulfide bridges follow: C30–C58 and C31–C73. N-linked (GlcNAc...) asparagine glycosylation is present at N78. A disordered region spans residues 92–130 (KNGRENVCSGKKQPSRKDRKGHTTRKHRTRGTHRHEASR). The segment covering 104 to 124 (QPSRKDRKGHTTRKHRTRGTH) has biased composition (basic residues).

The protein belongs to the intercrine beta (chemokine CC) family. In terms of tissue distribution, mainly expressed in testis, epithelial cells of normal colon, kidney, Peyer patches, lymph nodes. Also found in lower levels in brain, spleen and lung.

It is found in the secreted. In terms of biological role, chemotactic for resting CD4, CD8 T-cells and eosinophils. Binds to CCR10 and induces calcium mobilization in a dose-dependent manner. The protein is C-C motif chemokine 28 (Ccl28) of Mus musculus (Mouse).